The primary structure comprises 196 residues: Peptidyl-tRNA hydrolase (196 aa).

Y17 contacts tRNA. H22 acts as the Proton acceptor in catalysis. TRNA-binding residues include F68, N70, and N116.

Belongs to the PTH family. In terms of assembly, monomer.

It is found in the cytoplasm. The enzyme catalyses an N-acyl-L-alpha-aminoacyl-tRNA + H2O = an N-acyl-L-amino acid + a tRNA + H(+). Functionally, hydrolyzes ribosome-free peptidyl-tRNAs (with 1 or more amino acids incorporated), which drop off the ribosome during protein synthesis, or as a result of ribosome stalling. Its function is as follows. Catalyzes the release of premature peptidyl moieties from peptidyl-tRNA molecules trapped in stalled 50S ribosomal subunits, and thus maintains levels of free tRNAs and 50S ribosomes. This Yersinia pestis bv. Antiqua (strain Antiqua) protein is Peptidyl-tRNA hydrolase.